The following is a 155-amino-acid chain: SsrA-binding protein (155 aa).

Belongs to the SmpB family.

The protein resides in the cytoplasm. Required for rescue of stalled ribosomes mediated by trans-translation. Binds to transfer-messenger RNA (tmRNA), required for stable association of tmRNA with ribosomes. tmRNA and SmpB together mimic tRNA shape, replacing the anticodon stem-loop with SmpB. tmRNA is encoded by the ssrA gene; the 2 termini fold to resemble tRNA(Ala) and it encodes a 'tag peptide', a short internal open reading frame. During trans-translation Ala-aminoacylated tmRNA acts like a tRNA, entering the A-site of stalled ribosomes, displacing the stalled mRNA. The ribosome then switches to translate the ORF on the tmRNA; the nascent peptide is terminated with the 'tag peptide' encoded by the tmRNA and targeted for degradation. The ribosome is freed to recommence translation, which seems to be the essential function of trans-translation. The chain is SsrA-binding protein from Lactococcus lactis subsp. lactis (strain IL1403) (Streptococcus lactis).